Reading from the N-terminus, the 151-residue chain is 3-dehydroquinate dehydratase (151 aa).

Tyr24 serves as the catalytic Proton acceptor. Substrate is bound by residues Asn76, His82, and Asp89. His102 acts as the Proton donor in catalysis. Residues 103 to 104 (VS) and Arg113 contribute to the substrate site.

It belongs to the type-II 3-dehydroquinase family. As to quaternary structure, homododecamer.

It catalyses the reaction 3-dehydroquinate = 3-dehydroshikimate + H2O. The protein operates within metabolic intermediate biosynthesis; chorismate biosynthesis; chorismate from D-erythrose 4-phosphate and phosphoenolpyruvate: step 3/7. Functionally, catalyzes a trans-dehydration via an enolate intermediate. The chain is 3-dehydroquinate dehydratase from Rhodopseudomonas palustris (strain ATCC BAA-98 / CGA009).